Consider the following 318-residue polypeptide: Transaldolase (318 aa).

Residue Lys132 is the Schiff-base intermediate with substrate of the active site.

The protein belongs to the transaldolase family. Type 1 subfamily. In terms of assembly, homodimer.

The protein localises to the cytoplasm. It carries out the reaction D-sedoheptulose 7-phosphate + D-glyceraldehyde 3-phosphate = D-erythrose 4-phosphate + beta-D-fructose 6-phosphate. It functions in the pathway carbohydrate degradation; pentose phosphate pathway; D-glyceraldehyde 3-phosphate and beta-D-fructose 6-phosphate from D-ribose 5-phosphate and D-xylulose 5-phosphate (non-oxidative stage): step 2/3. Transaldolase is important for the balance of metabolites in the pentose-phosphate pathway. This is Transaldolase from Allorhizobium ampelinum (strain ATCC BAA-846 / DSM 112012 / S4) (Agrobacterium vitis (strain S4)).